We begin with the raw amino-acid sequence, 289 residues long: 1D-myo-inositol 2-acetamido-2-deoxy-alpha-D-glucopyranoside deacetylase 1 (289 aa).

3 residues coordinate Zn(2+): histidine 4, aspartate 7, and histidine 140.

This sequence belongs to the MshB deacetylase family. Zn(2+) is required as a cofactor.

The catalysed reaction is 1D-myo-inositol 2-acetamido-2-deoxy-alpha-D-glucopyranoside + H2O = 1D-myo-inositol 2-amino-2-deoxy-alpha-D-glucopyranoside + acetate. Functionally, catalyzes the deacetylation of 1D-myo-inositol 2-acetamido-2-deoxy-alpha-D-glucopyranoside (GlcNAc-Ins) in the mycothiol biosynthesis pathway. The protein is 1D-myo-inositol 2-acetamido-2-deoxy-alpha-D-glucopyranoside deacetylase 1 of Frankia alni (strain DSM 45986 / CECT 9034 / ACN14a).